The chain runs to 371 residues: uncharacterized protein (371 aa).

It to E.coli YcjY.

This is an uncharacterized protein from Pseudomonas aeruginosa (strain ATCC 15692 / DSM 22644 / CIP 104116 / JCM 14847 / LMG 12228 / 1C / PRS 101 / PAO1).